The chain runs to 158 residues: NADPH-dependent 7-cyano-7-deazaguanine reductase (158 aa).

The active-site Thioimide intermediate is the Cys56. The active-site Proton donor is the Asp63. Residues 78-80 and 97-98 contribute to the substrate site; these read LES and HE.

This sequence belongs to the GTP cyclohydrolase I family. QueF type 1 subfamily.

The protein resides in the cytoplasm. It catalyses the reaction 7-aminomethyl-7-carbaguanine + 2 NADP(+) = 7-cyano-7-deazaguanine + 2 NADPH + 3 H(+). Its pathway is tRNA modification; tRNA-queuosine biosynthesis. Catalyzes the NADPH-dependent reduction of 7-cyano-7-deazaguanine (preQ0) to 7-aminomethyl-7-deazaguanine (preQ1). This Nitrobacter winogradskyi (strain ATCC 25391 / DSM 10237 / CIP 104748 / NCIMB 11846 / Nb-255) protein is NADPH-dependent 7-cyano-7-deazaguanine reductase.